Here is a 265-residue protein sequence, read N- to C-terminus: Hydroxyethylthiazole kinase (265 aa).

Methionine 36 is a substrate binding site. ATP-binding residues include lysine 112 and serine 160. Glycine 187 lines the substrate pocket.

This sequence belongs to the Thz kinase family. Requires Mg(2+) as cofactor.

It carries out the reaction 5-(2-hydroxyethyl)-4-methylthiazole + ATP = 4-methyl-5-(2-phosphooxyethyl)-thiazole + ADP + H(+). Its pathway is cofactor biosynthesis; thiamine diphosphate biosynthesis; 4-methyl-5-(2-phosphoethyl)-thiazole from 5-(2-hydroxyethyl)-4-methylthiazole: step 1/1. In terms of biological role, catalyzes the phosphorylation of the hydroxyl group of 4-methyl-5-beta-hydroxyethylthiazole (THZ). The polypeptide is Hydroxyethylthiazole kinase (Clostridium perfringens (strain ATCC 13124 / DSM 756 / JCM 1290 / NCIMB 6125 / NCTC 8237 / Type A)).